Reading from the N-terminus, the 154-residue chain is 6,7-dimethyl-8-ribityllumazine synthase (154 aa).

5-amino-6-(D-ribitylamino)uracil contacts are provided by residues F22, A56–E58, and A80–I82. A85–T86 is a binding site for (2S)-2-hydroxy-3-oxobutyl phosphate. H88 acts as the Proton donor in catalysis. F113 is a binding site for 5-amino-6-(D-ribitylamino)uracil. R127 contributes to the (2S)-2-hydroxy-3-oxobutyl phosphate binding site.

The protein belongs to the DMRL synthase family.

It catalyses the reaction (2S)-2-hydroxy-3-oxobutyl phosphate + 5-amino-6-(D-ribitylamino)uracil = 6,7-dimethyl-8-(1-D-ribityl)lumazine + phosphate + 2 H2O + H(+). Its pathway is cofactor biosynthesis; riboflavin biosynthesis; riboflavin from 2-hydroxy-3-oxobutyl phosphate and 5-amino-6-(D-ribitylamino)uracil: step 1/2. Catalyzes the formation of 6,7-dimethyl-8-ribityllumazine by condensation of 5-amino-6-(D-ribitylamino)uracil with 3,4-dihydroxy-2-butanone 4-phosphate. This is the penultimate step in the biosynthesis of riboflavin. The protein is 6,7-dimethyl-8-ribityllumazine synthase of Clostridium botulinum (strain Okra / Type B1).